Consider the following 333-residue polypeptide: Protein XAP5 CIRCADIAN TIMEKEEPER (333 aa).

Coiled coils occupy residues 12–43 and 70–116; these read AQDA…SDGQ and TREQ…VRGD. The span at 89–98 shows a compositional bias: basic and acidic residues; that stretch reads EKEKLQKLQQ. A disordered region spans residues 89–171; that stretch reads EKEKLQKLQQ…REREAEEQAE (83 aa). The span at 123–136 shows a compositional bias: acidic residues; it reads DEIENGSDEDEFEN. Residues 160–171 are compositionally biased toward basic and acidic residues; sequence PDREREAEEQAE.

Belongs to the FAM50 family.

The protein resides in the nucleus. Its function is as follows. Involved in light regulation of the circadian clock and photomorphogenesis. The sequence is that of Protein XAP5 CIRCADIAN TIMEKEEPER (XCT) from Oryza sativa subsp. indica (Rice).